The sequence spans 310 residues: Porphobilinogen deaminase (310 aa).

An S-(dipyrrolylmethanemethyl)cysteine modification is found at cysteine 242.

It belongs to the HMBS family. Monomer. Dipyrromethane is required as a cofactor.

It carries out the reaction 4 porphobilinogen + H2O = hydroxymethylbilane + 4 NH4(+). The protein operates within porphyrin-containing compound metabolism; protoporphyrin-IX biosynthesis; coproporphyrinogen-III from 5-aminolevulinate: step 2/4. Its function is as follows. Tetrapolymerization of the monopyrrole PBG into the hydroxymethylbilane pre-uroporphyrinogen in several discrete steps. This is Porphobilinogen deaminase from Shewanella baltica (strain OS195).